A 461-amino-acid chain; its full sequence is Argininosuccinate lyase (461 aa).

The protein belongs to the lyase 1 family. Argininosuccinate lyase subfamily.

It localises to the cytoplasm. The enzyme catalyses 2-(N(omega)-L-arginino)succinate = fumarate + L-arginine. It functions in the pathway amino-acid biosynthesis; L-arginine biosynthesis; L-arginine from L-ornithine and carbamoyl phosphate: step 3/3. The protein is Argininosuccinate lyase of Syntrophotalea carbinolica (strain DSM 2380 / NBRC 103641 / GraBd1) (Pelobacter carbinolicus).